The primary structure comprises 1219 residues: Regulator of telomere elongation helicase 1 (1219 aa).

The Helicase ATP-binding domain maps to 7-296; that stretch reads NGVTVDFPFQ…TKAAQQGEPH (290 aa). Position 42–49 (42–49) interacts with ATP; the sequence is SPTGTGKT. The [4Fe-4S] cluster site is built by cysteine 145, cysteine 163, cysteine 172, and cysteine 207. The short motif at 151-167 is the Nuclear localization signal element; the sequence is KKQESNHLQIHLCRKKV. Positions 250–253 match the DEAH box motif; the sequence is DEAH. 7 disordered regions span residues 287–306, 757–786, 839–877, 979–1005, 1017–1054, 1132–1151, and 1159–1219; these read TKAA…SPSP, PAPA…FFST, EHSE…GRKK, RPEH…PDPK, DPQE…RAGK, CTDL…PQEE, and LTHR…EWGL. Residues 757–766 show a composition bias toward low complexity; it reads PAPAPRATAP. The segment covering 863 to 873 has biased composition (basic and acidic residues); the sequence is SEKRPAEEPRG. The Nuclear localization signal signature appears at 871 to 877; sequence PRGGRKK. The segment covering 1176–1185 has biased composition (polar residues); sequence KTQSKISSFL. Positions 1178-1185 match the PIP-box motif; the sequence is QSKISSFL. Low complexity predominate over residues 1200-1219; the sequence is AGPSQSSGPPHGPAASEWGL.

Belongs to the helicase family. RAD3/XPD subfamily. Interacts with TERF1. Interacts (via PIP-box) with PCNA; the interaction is direct and essential for suppressing telomere fragility. Interacts with MMS19; the interaction mediates the association of RTEL1 with the cytosolic iron-sulfur protein assembly (CIA) complex.

The protein localises to the nucleus. The enzyme catalyses ATP + H2O = ADP + phosphate + H(+). Functionally, a probable ATP-dependent DNA helicase implicated in telomere-length regulation, DNA repair and the maintenance of genomic stability. Acts as an anti-recombinase to counteract toxic recombination and limit crossover during meiosis. Regulates meiotic recombination and crossover homeostasis by physically dissociating strand invasion events and thereby promotes noncrossover repair by meiotic synthesis dependent strand annealing (SDSA) as well as disassembly of D loop recombination intermediates. Also disassembles T loops and prevents telomere fragility by counteracting telomeric G4-DNA structures, which together ensure the dynamics and stability of the telomere. This Homo sapiens (Human) protein is Regulator of telomere elongation helicase 1.